The primary structure comprises 199 residues: Recombination protein RecR (199 aa).

The C4-type zinc-finger motif lies at 57–72 (CQSCRTYTEESLCPIC). Residues 81–176 (STICVVETPA…VISRIAHGVP (96 aa)) form the Toprim domain.

Belongs to the RecR family.

Its function is as follows. May play a role in DNA repair. It seems to be involved in an RecBC-independent recombinational process of DNA repair. It may act with RecF and RecO. This is Recombination protein RecR from Shewanella sp. (strain MR-4).